Here is an 88-residue protein sequence, read N- to C-terminus: MLDKEKKAEIINKFKLHETDTGSPEVQIALLTERINRLTEHLQVHKKDHHSRRGLLKMVGQRRALLNYLMKKDINRYRAIIEKLDLRK.

The protein belongs to the universal ribosomal protein uS15 family. Part of the 30S ribosomal subunit. Forms a bridge to the 50S subunit in the 70S ribosome, contacting the 23S rRNA.

In terms of biological role, one of the primary rRNA binding proteins, it binds directly to 16S rRNA where it helps nucleate assembly of the platform of the 30S subunit by binding and bridging several RNA helices of the 16S rRNA. Its function is as follows. Forms an intersubunit bridge (bridge B4) with the 23S rRNA of the 50S subunit in the ribosome. The polypeptide is Small ribosomal subunit protein uS15 (Caldanaerobacter subterraneus subsp. tengcongensis (strain DSM 15242 / JCM 11007 / NBRC 100824 / MB4) (Thermoanaerobacter tengcongensis)).